Consider the following 216-residue polypeptide: Ras-related protein Rab-5C (216 aa).

Positions 30, 31, 33, 34, 35, 36, 47, 48, 53, and 79 each coordinate GTP. Position 35 (Ser-35) interacts with Mg(2+). 2 consecutive short sequence motifs (switch) follow at residues 45–57 (QFHEYQESTIGAA) and 78–94 (AGQERYHSLAPMYYRGA). A Mg(2+)-binding site is contributed by Thr-53. Phosphoserine is present on Ser-85. Asn-134, Lys-135, Asp-137, Ala-165, and Lys-166 together coordinate GTP. The interval 185–216 (NEPQNAAGAPGRTRGVDLQESNPASRSQCCSN) is disordered. Residues 203-216 (QESNPASRSQCCSN) show a composition bias toward polar residues. Residues Cys-213 and Cys-214 are each lipidated (S-geranylgeranyl cysteine).

Belongs to the small GTPase superfamily. Rab family. As to quaternary structure, interacts with EEA1 and INCA1. Interacts with GDI1, GDI2, CHML and CHM; phosphorylation at Ser-85 disrupts this interaction. Mg(2+) is required as a cofactor. Post-translationally, phosphorylation of Ser-85 in the switch II region by LRRK2 prevents the association of RAB regulatory proteins, including CHM, CHML and RAB GDP dissociation inhibitors GDI1 and GDI2.

The protein localises to the cell membrane. Its subcellular location is the early endosome membrane. The protein resides in the melanosome. It catalyses the reaction GTP + H2O = GDP + phosphate + H(+). With respect to regulation, regulated by guanine nucleotide exchange factors (GEFs) which promote the exchange of bound GDP for free GTP. Regulated by GTPase activating proteins (GAPs) which increase the GTP hydrolysis activity. Inhibited by GDP dissociation inhibitors (GDIs). The small GTPases Rab are key regulators of intracellular membrane trafficking, from the formation of transport vesicles to their fusion with membranes. Rabs cycle between an inactive GDP-bound form and an active GTP-bound form that is able to recruit to membranes different sets of downstream effectors directly responsible for vesicle formation, movement, tethering and fusion. This is Ras-related protein Rab-5C from Mus musculus (Mouse).